A 421-amino-acid polypeptide reads, in one-letter code: Serine hydroxymethyltransferase (421 aa).

Residues Leu123 and Gly127–Leu129 each bind (6S)-5,6,7,8-tetrahydrofolate. An N6-(pyridoxal phosphate)lysine modification is found at Lys232.

This sequence belongs to the SHMT family. Homodimer. Pyridoxal 5'-phosphate is required as a cofactor.

The protein localises to the cytoplasm. The enzyme catalyses (6R)-5,10-methylene-5,6,7,8-tetrahydrofolate + glycine + H2O = (6S)-5,6,7,8-tetrahydrofolate + L-serine. Its pathway is one-carbon metabolism; tetrahydrofolate interconversion. The protein operates within amino-acid biosynthesis; glycine biosynthesis; glycine from L-serine: step 1/1. In terms of biological role, catalyzes the reversible interconversion of serine and glycine with tetrahydrofolate (THF) serving as the one-carbon carrier. This reaction serves as the major source of one-carbon groups required for the biosynthesis of purines, thymidylate, methionine, and other important biomolecules. Also exhibits THF-independent aldolase activity toward beta-hydroxyamino acids, producing glycine and aldehydes, via a retro-aldol mechanism. The chain is Serine hydroxymethyltransferase from Ehrlichia ruminantium (strain Gardel).